We begin with the raw amino-acid sequence, 363 residues long: UDP-N-acetylglucosamine--N-acetylmuramyl-(pentapeptide) pyrophosphoryl-undecaprenol N-acetylglucosamine transferase (363 aa).

UDP-N-acetyl-alpha-D-glucosamine is bound by residues 14 to 16 (TGG), Arg171, Ser200, and Gln290.

Belongs to the glycosyltransferase 28 family. MurG subfamily.

Its subcellular location is the cell inner membrane. The catalysed reaction is di-trans,octa-cis-undecaprenyl diphospho-N-acetyl-alpha-D-muramoyl-L-alanyl-D-glutamyl-meso-2,6-diaminopimeloyl-D-alanyl-D-alanine + UDP-N-acetyl-alpha-D-glucosamine = di-trans,octa-cis-undecaprenyl diphospho-[N-acetyl-alpha-D-glucosaminyl-(1-&gt;4)]-N-acetyl-alpha-D-muramoyl-L-alanyl-D-glutamyl-meso-2,6-diaminopimeloyl-D-alanyl-D-alanine + UDP + H(+). Its pathway is cell wall biogenesis; peptidoglycan biosynthesis. Functionally, cell wall formation. Catalyzes the transfer of a GlcNAc subunit on undecaprenyl-pyrophosphoryl-MurNAc-pentapeptide (lipid intermediate I) to form undecaprenyl-pyrophosphoryl-MurNAc-(pentapeptide)GlcNAc (lipid intermediate II). In Borreliella burgdorferi (strain ATCC 35210 / DSM 4680 / CIP 102532 / B31) (Borrelia burgdorferi), this protein is UDP-N-acetylglucosamine--N-acetylmuramyl-(pentapeptide) pyrophosphoryl-undecaprenol N-acetylglucosamine transferase.